A 395-amino-acid chain; its full sequence is Phosphopentomutase (395 aa).

Residues Asp16, Asp289, His294, Asp330, His331, and His342 each contribute to the Mn(2+) site.

It belongs to the phosphopentomutase family. Requires Mn(2+) as cofactor.

It localises to the cytoplasm. The catalysed reaction is 2-deoxy-alpha-D-ribose 1-phosphate = 2-deoxy-D-ribose 5-phosphate. It carries out the reaction alpha-D-ribose 1-phosphate = D-ribose 5-phosphate. It functions in the pathway carbohydrate degradation; 2-deoxy-D-ribose 1-phosphate degradation; D-glyceraldehyde 3-phosphate and acetaldehyde from 2-deoxy-alpha-D-ribose 1-phosphate: step 1/2. Its function is as follows. Isomerase that catalyzes the conversion of deoxy-ribose 1-phosphate (dRib-1-P) and ribose 1-phosphate (Rib-1-P) to deoxy-ribose 5-phosphate (dRib-5-P) and ribose 5-phosphate (Rib-5-P), respectively. The protein is Phosphopentomutase of Geobacillus kaustophilus (strain HTA426).